The following is a 327-amino-acid chain: Flap endonuclease 1 (327 aa).

The interval 1–98 (MGVKLKDIIQ…ETIDQRRQTR (98 aa)) is N-domain. D27, D80, E152, E154, D173, D175, and D226 together coordinate Mg(2+). Residues 116-246 (EARKYAMRSS…KTALKLAKKG (131 aa)) are I-domain. Residues 319 to 327 (SQKSLEDWF) form an interaction with PCNA region.

The protein belongs to the XPG/RAD2 endonuclease family. FEN1 subfamily. In terms of assembly, interacts with PCNA. PCNA stimulates the nuclease activity without altering cleavage specificity. The cofactor is Mg(2+).

Functionally, structure-specific nuclease with 5'-flap endonuclease and 5'-3' exonuclease activities involved in DNA replication and repair. During DNA replication, cleaves the 5'-overhanging flap structure that is generated by displacement synthesis when DNA polymerase encounters the 5'-end of a downstream Okazaki fragment. Binds the unpaired 3'-DNA end and kinks the DNA to facilitate 5' cleavage specificity. Cleaves one nucleotide into the double-stranded DNA from the junction in flap DNA, leaving a nick for ligation. Also involved in the base excision repair (BER) pathway. Acts as a genome stabilization factor that prevents flaps from equilibrating into structures that lead to duplications and deletions. Also possesses 5'-3' exonuclease activity on nicked or gapped double-stranded DNA. The chain is Flap endonuclease 1 from Methanobrevibacter smithii (strain ATCC 35061 / DSM 861 / OCM 144 / PS).